A 168-amino-acid polypeptide reads, in one-letter code: Endoribonuclease YbeY (168 aa).

The Zn(2+) site is built by histidine 123, histidine 127, and histidine 133.

Belongs to the endoribonuclease YbeY family. It depends on Zn(2+) as a cofactor.

It is found in the cytoplasm. In terms of biological role, single strand-specific metallo-endoribonuclease involved in late-stage 70S ribosome quality control and in maturation of the 3' terminus of the 16S rRNA. The protein is Endoribonuclease YbeY of Francisella tularensis subsp. tularensis (strain SCHU S4 / Schu 4).